A 428-amino-acid polypeptide reads, in one-letter code: Transcription factor bHLH91 (428 aa).

The bHLH domain occupies 210–259; sequence KRKNKPFTTERERRCHLNERYEALKLLIPSPSKGDRASILQDGIDYINEL. The tract at residues 278–320 is disordered; that stretch reads RHKNNEVDDNNNNKNLDDHGNEDDDDDDENMEKKPESDVIDQC. Positions 297–307 are enriched in acidic residues; that stretch reads GNEDDDDDDEN.

As to quaternary structure, homodimer. In terms of tissue distribution, flowers.

The protein localises to the nucleus. The chain is Transcription factor bHLH91 (BHLH91) from Arabidopsis thaliana (Mouse-ear cress).